Reading from the N-terminus, the 149-residue chain is Transcriptional repressor NrdR (149 aa).

A zinc finger lies at Cys3–Cys34. Residues Pro49–Glu139 enclose the ATP-cone domain.

It belongs to the NrdR family. The cofactor is Zn(2+).

Its function is as follows. Negatively regulates transcription of bacterial ribonucleotide reductase nrd genes and operons by binding to NrdR-boxes. The protein is Transcriptional repressor NrdR of Vibrio atlanticus (strain LGP32) (Vibrio splendidus (strain Mel32)).